Here is a 347-residue protein sequence, read N- to C-terminus: Gas vesicle ATPase GvpN1 (347 aa).

The span at 1-11 (MTNESRKRKVR) shows a compositional bias: basic residues. Residues 1-64 (MTNESRKRKV…EGFVPEEQSF (64 aa)) are disordered. Over residues 18-55 (SRGDKKQGRSQSRDDKEIERLERQNDARGQESSTHVDE) the composition is skewed to basic and acidic residues. Residue 91 to 98 (GPTGCGKT) participates in ATP binding.

This sequence belongs to the CbbQ/NirQ/NorQ/GpvN family. Forms homodimers, forms a GvpN1-GvpO1 heterodimer, interacts with GvpC1 (via the latter's C-terminus) and GvpL, might interact with GvpA1.

The protein resides in the gas vesicle. The protein localises to the cytoplasm. The catalysed reaction is ATP + H2O = ADP + phosphate + H(+). Functionally, an ATPase that functions in gas vesicle formation. A minor component of the gas vesicle, also found in soluble extracts. Probably enhances gas vesicle formation. Gas vesicles are hollow, gas filled proteinaceous nanostructures found in several microbial planktonic microorganisms. They allow positioning of halobacteria at the optimal depth for growth in the poorly aerated, shallow brine pools of their habitat. Its function is as follows. Expression of a 9.5 kb p-vac DNA fragment containing 2 divergently transcribed regions (gvpD-gvpE-gvpF-gvpG-gvpH-gvpI-gvpJ-gvpK-gvpL-gvpM and gvpA-gvpC-gvpN-gvpO) allows H.volcanii to produce gas vesicles. A similar region restores gas vesicle production in H.halobium without the p-vac locus, but which still have the c-vac locus. The polypeptide is Gas vesicle ATPase GvpN1 (gvpN11) (Halobacterium salinarum (strain ATCC 700922 / JCM 11081 / NRC-1) (Halobacterium halobium)).